The sequence spans 231 residues: MAKLTKRQKAIAAKVEAGKQYGFEEAAALLAELSTIKFKESVDIAINLGVDPRKSDQVVRGATVLPNGTGKDVRVAVFTQGPAAEAALAAGADRVGMDELAAEMKGGDLNYDVVIASPDAMRVVGQLGQILGPRGLMPNPKVGTVTPDVASAVKNAKAGQVRFRTDKNGIIHASVGKIDFEPIKLKQNVEALLSDLKRLKPSTSKGIYVKRVTLSSTMGPGLVIDQASLEA.

Belongs to the universal ribosomal protein uL1 family. As to quaternary structure, part of the 50S ribosomal subunit.

Binds directly to 23S rRNA. The L1 stalk is quite mobile in the ribosome, and is involved in E site tRNA release. Functionally, protein L1 is also a translational repressor protein, it controls the translation of the L11 operon by binding to its mRNA. This chain is Large ribosomal subunit protein uL1, found in Azotobacter vinelandii (strain DJ / ATCC BAA-1303).